A 569-amino-acid polypeptide reads, in one-letter code: Urease subunit alpha (569 aa).

One can recognise a Urease domain in the interval G132–F569. H137, H139, and K220 together coordinate Ni(2+). Position 220 is an N6-carboxylysine (K220). Position 222 (H222) interacts with substrate. Ni(2+) contacts are provided by H249 and H275. The active-site Proton donor is H323. D363 lines the Ni(2+) pocket.

It belongs to the metallo-dependent hydrolases superfamily. Urease alpha subunit family. As to quaternary structure, heterotrimer of UreA (gamma), UreB (beta) and UreC (alpha) subunits. Three heterotrimers associate to form the active enzyme. Ni cation serves as cofactor. Carboxylation allows a single lysine to coordinate two nickel ions.

Its subcellular location is the cytoplasm. It carries out the reaction urea + 2 H2O + H(+) = hydrogencarbonate + 2 NH4(+). The protein operates within nitrogen metabolism; urea degradation; CO(2) and NH(3) from urea (urease route): step 1/1. In Dechloromonas aromatica (strain RCB), this protein is Urease subunit alpha.